Consider the following 171-residue polypeptide: Translationally-controlled tumor protein homolog (171 aa).

A TCTP domain is found at Met-1–Cys-171.

It belongs to the TCTP family. As to expression, expressed by the venom gland.

The protein resides in the secreted. In terms of biological role, venom protein that causes edema, enhances vascular permeability and is likely related to the inflammatory activity of the venom. This is Translationally-controlled tumor protein homolog from Micrurus fulvius (Eastern coral snake).